The following is a 152-amino-acid chain: Transcriptional regulator MraZ (152 aa).

SpoVT-AbrB domains follow at residues 5-52 and 81-124; these read INAI…TAAQ and ATDV…NKEL.

It belongs to the MraZ family. Forms oligomers.

The protein localises to the cytoplasm. The protein resides in the nucleoid. In Legionella pneumophila (strain Paris), this protein is Transcriptional regulator MraZ.